The following is a 404-amino-acid chain: Argininosuccinate synthase (404 aa).

ATP contacts are provided by residues 12-20 (AYSGGLDTS) and alanine 39. L-citrulline contacts are provided by tyrosine 90 and serine 95. An ATP-binding site is contributed by glycine 120. L-aspartate contacts are provided by threonine 122, asparagine 126, and aspartate 127. Asparagine 126 is a binding site for L-citrulline. L-citrulline contacts are provided by arginine 130, serine 181, serine 190, glutamate 266, and tyrosine 278.

This sequence belongs to the argininosuccinate synthase family. Type 1 subfamily. In terms of assembly, homotetramer.

It is found in the cytoplasm. The catalysed reaction is L-citrulline + L-aspartate + ATP = 2-(N(omega)-L-arginino)succinate + AMP + diphosphate + H(+). Its pathway is amino-acid biosynthesis; L-arginine biosynthesis; L-arginine from L-ornithine and carbamoyl phosphate: step 2/3. The polypeptide is Argininosuccinate synthase (Rhodospirillum rubrum (strain ATCC 11170 / ATH 1.1.1 / DSM 467 / LMG 4362 / NCIMB 8255 / S1)).